A 451-amino-acid polypeptide reads, in one-letter code: Probable metal transport system membrane protein CT_069 (451 aa).

Helical transmembrane passes span 14-34 (SFLA…ILLV), 38-58 (PLLS…GALL), 70-90 (WVII…ISFL), 100-120 (SALC…VSYV), 145-165 (TEAK…WWWY), 192-212 (VLVF…ILLI), 233-253 (ILIL…YFSV), and 269-289 (ILPT…LCLI). The interval 432-451 (PDYDPHQREIPKRTRKSDGC) is disordered. Residues 434–451 (YDPHQREIPKRTRKSDGC) are compositionally biased toward basic and acidic residues.

This sequence belongs to the ABC-3 integral membrane protein family.

It is found in the cell inner membrane. Functionally, part of an ATP-driven transport system CT_067/CT_068/CT_069/CT_070 for a metal. The polypeptide is Probable metal transport system membrane protein CT_069 (Chlamydia trachomatis serovar D (strain ATCC VR-885 / DSM 19411 / UW-3/Cx)).